Reading from the N-terminus, the 284-residue chain is Nucleotide-binding protein NMCC_0698 (284 aa).

Residue 8–15 participates in ATP binding; it reads GLSGSGKS. 58-61 provides a ligand contact to GTP; the sequence is DVRS.

The protein belongs to the RapZ-like family.

Displays ATPase and GTPase activities. The sequence is that of Nucleotide-binding protein NMCC_0698 from Neisseria meningitidis serogroup C (strain 053442).